The following is a 482-amino-acid chain: Phenylalanine--tRNA ligase alpha subunit (482 aa).

Residues Thr-327, 366–368 (QIE), and Tyr-406 each bind L-phenylalanine. Glu-408 is a Mg(2+) binding site. Residue Phe-430 coordinates L-phenylalanine.

This sequence belongs to the class-II aminoacyl-tRNA synthetase family. Phe-tRNA synthetase alpha subunit type 2 subfamily. Tetramer of two alpha and two beta subunits. Requires Mg(2+) as cofactor.

The protein resides in the cytoplasm. The enzyme catalyses tRNA(Phe) + L-phenylalanine + ATP = L-phenylalanyl-tRNA(Phe) + AMP + diphosphate + H(+). This Thermoplasma volcanium (strain ATCC 51530 / DSM 4299 / JCM 9571 / NBRC 15438 / GSS1) protein is Phenylalanine--tRNA ligase alpha subunit.